The following is a 263-amino-acid chain: 7beta-hydroxysteroid dehydrogenase (263 aa).

Residues 17-21 (TEGVG), 40-41 (RR), and 66-67 (DF) contribute to the NADP(+) site. The Proton acceptor role is filled by Tyr156. Residue Ser240 participates in NADP(+) binding.

The protein belongs to the short-chain dehydrogenases/reductases (SDR) family.

The enzyme catalyses a 7beta-hydroxysteroid + NADP(+) = a 7-oxosteroid + NADPH + H(+). The catalysed reaction is 7-oxolithocholate + NADPH + H(+) = ursodeoxycholate + NADP(+). Functionally, 7beta-hydroxysteroid dehydrogenase that catalyzes the reduction of the 7-oxo group of 7-oxo-lithocholate (7-oxo-LCA), to yield ursodeoxycholate (UDCA). As R.gnavus is a common core bacterium of the human gut microbiota, this enzyme contributes to the formation of UDCA in the human colon. UDCA is regarded as a chemopreventive beneficial secondary bile acid due to its low hydrophobicity; it protects hepatocytes and bile duct epithelial cells against necrosis and apoptosis induced by more hydrophobic secondary bile acids like deoxycholate (DCA). This enzyme is also able to catalyze the reverse reaction in vitro, i.e. the oxidation of the 7beta-hydroxy group of UDCA to 7-oxo-LCA, but much less efficiently than the reduction reaction. This is 7beta-hydroxysteroid dehydrogenase from Mediterraneibacter gnavus (strain ATCC 29149 / DSM 114966 / JCM 6515 / VPI C7-9) (Ruminococcus gnavus).